The following is an 89-amino-acid chain: Small ribosomal subunit protein uS15 (89 aa).

This sequence belongs to the universal ribosomal protein uS15 family. As to quaternary structure, part of the 30S ribosomal subunit. Forms a bridge to the 50S subunit in the 70S ribosome, contacting the 23S rRNA.

One of the primary rRNA binding proteins, it binds directly to 16S rRNA where it helps nucleate assembly of the platform of the 30S subunit by binding and bridging several RNA helices of the 16S rRNA. Functionally, forms an intersubunit bridge (bridge B4) with the 23S rRNA of the 50S subunit in the ribosome. This Mycolicibacterium smegmatis (strain ATCC 700084 / mc(2)155) (Mycobacterium smegmatis) protein is Small ribosomal subunit protein uS15.